Reading from the N-terminus, the 264-residue chain is Thiazole synthase (264 aa).

Lysine 106 acts as the Schiff-base intermediate with DXP in catalysis. Residues glycine 167, alanine 193–glycine 194, and asparagine 215–serine 216 contribute to the 1-deoxy-D-xylulose 5-phosphate site.

It belongs to the ThiG family. In terms of assembly, homotetramer. Forms heterodimers with either ThiH or ThiS.

It localises to the cytoplasm. It catalyses the reaction [ThiS sulfur-carrier protein]-C-terminal-Gly-aminoethanethioate + 2-iminoacetate + 1-deoxy-D-xylulose 5-phosphate = [ThiS sulfur-carrier protein]-C-terminal Gly-Gly + 2-[(2R,5Z)-2-carboxy-4-methylthiazol-5(2H)-ylidene]ethyl phosphate + 2 H2O + H(+). It participates in cofactor biosynthesis; thiamine diphosphate biosynthesis. Its function is as follows. Catalyzes the rearrangement of 1-deoxy-D-xylulose 5-phosphate (DXP) to produce the thiazole phosphate moiety of thiamine. Sulfur is provided by the thiocarboxylate moiety of the carrier protein ThiS. In vitro, sulfur can be provided by H(2)S. The sequence is that of Thiazole synthase from Pseudomonas fluorescens (strain SBW25).